We begin with the raw amino-acid sequence, 256 residues long: Spheroidene monooxygenase (256 aa).

Residues 1 to 23 (MTNELSNAAGASQQGPAASSFSA) show a composition bias toward low complexity. The interval 1–26 (MTNELSNAAGASQQGPAASSFSADTP) is disordered.

The protein belongs to the CrtA family. Requires heme as cofactor.

It catalyses the reaction spheroidene + 4 reduced [2Fe-2S]-[ferredoxin] + 2 O2 + 4 H(+) = spheroiden-2-one + 4 oxidized [2Fe-2S]-[ferredoxin] + 3 H2O. The enzyme catalyses spirilloxanthin + 4 reduced [2Fe-2S]-[ferredoxin] + 2 O2 + 4 H(+) = 2-oxospirilloxanthin + 4 oxidized [2Fe-2S]-[ferredoxin] + 3 H2O. It carries out the reaction 2-oxospirilloxanthin + 4 reduced [2Fe-2S]-[ferredoxin] + 2 O2 + 4 H(+) = 2,2'-dioxospirilloxanthin + 4 oxidized [2Fe-2S]-[ferredoxin] + 3 H2O. The catalysed reaction is spheroidene + 2 reduced [2Fe-2S]-[ferredoxin] + O2 + 2 H(+) = 2-hydroxyspheroidene + 2 oxidized [2Fe-2S]-[ferredoxin] + H2O. It catalyses the reaction 2-hydroxyspheroidene + 2 reduced [2Fe-2S]-[ferredoxin] + O2 + 2 H(+) = 2,2-dihydroxyspheroidene + 2 oxidized [2Fe-2S]-[ferredoxin] + H2O. The enzyme catalyses 2,2-dihydroxyspheroidene = spheroiden-2-one + H2O. It carries out the reaction spirilloxanthin + 2 reduced [2Fe-2S]-[ferredoxin] + O2 + 2 H(+) = 2-hydroxyspirilloxanthin + 2 oxidized [2Fe-2S]-[ferredoxin] + H2O. The catalysed reaction is 2-hydroxyspirilloxanthin + 2 reduced [2Fe-2S]-[ferredoxin] + O2 + 2 H(+) = 2,2-dihydroxyspirilloxanthin + 2 oxidized [2Fe-2S]-[ferredoxin] + H2O. It catalyses the reaction 2,2-dihydroxyspirilloxanthin = 2-oxospirilloxanthin + H2O. The enzyme catalyses 2-oxospirilloxanthin + 2 reduced [2Fe-2S]-[ferredoxin] + O2 + 2 H(+) = 2'-hydroxy-2-oxospirilloxanthin + 2 oxidized [2Fe-2S]-[ferredoxin] + H2O. It carries out the reaction 2'-hydroxy-2-oxospirilloxanthin + 2 reduced [2Fe-2S]-[ferredoxin] + O2 + 2 H(+) = 2',2'-dihydroxy-2-oxospirilloxanthin + 2 oxidized [2Fe-2S]-[ferredoxin] + H2O. The catalysed reaction is 2',2'-dihydroxy-2-oxospirilloxanthin = 2,2'-dioxospirilloxanthin + H2O. Its pathway is carotenoid biosynthesis; spheroidene biosynthesis. It participates in carotenoid biosynthesis; spirilloxanthin biosynthesis. Its function is as follows. Involved in the biosynthesis of the carotenoids spheroidene and spirilloxanthin. Catalyzes the introduction of one keto group at the C-2 position of spheroidene and two keto groups at the C-2 and C-2' positions of spirilloxanthin. This Rubrivivax gelatinosus (Rhodocyclus gelatinosus) protein is Spheroidene monooxygenase.